The primary structure comprises 187 residues: MSLLPTGTLILLVLFILVLITMTKNTSSLNVTKPVSAIAVLEGPVKGTVRFVEESSKVKISVDISGLKPNRKHGFHVHEAGDLTDGCTSACAHFNPFGTAHGGPDSKIRHVGDLGNILADKNGKAKYSFYDSMIKLRGKCNIIGRAIVVHADTDDLGLGGNAESLKTGNAGKRIGCAVIGYAKENFC.

A signal peptide spans 1 to 21 (MSLLPTGTLILLVLFILVLIT). Cu cation is bound by residues histidine 76, histidine 78, and histidine 93. The cysteines at positions 87 and 176 are disulfide-linked. Positions 93, 101, 110, and 113 each coordinate Zn(2+). A Cu cation-binding site is contributed by histidine 150.

It belongs to the Cu-Zn superoxide dismutase family. It depends on Cu cation as a cofactor. Zn(2+) serves as cofactor.

The enzyme catalyses 2 superoxide + 2 H(+) = H2O2 + O2. Functionally, destroys radicals which are normally produced within the cells and which are toxic to biological systems. In Chlorella (PBCV-1), this protein is Superoxide dismutase [Cu-Zn].